The chain runs to 319 residues: 12-(S)-hydroxy-5,8,10,14-eicosatetraenoic acid receptor (319 aa).

Over 1 to 16 (MPFPNCSAPSTVVATA) the chain is Extracellular. N5 carries an N-linked (GlcNAc...) asparagine glycan. The chain crosses the membrane as a helical span at residues 17-37 (VGVLLGLECGLGLLGNAVALW). The Cytoplasmic segment spans residues 38–52 (TFLFRVRVWKPYAVY). Residues 53-73 (LLNLALADLLLAACLPFLAAF) traverse the membrane as a helical segment. The Extracellular portion of the chain corresponds to 74 to 91 (YLSLQAWHLGRVGCWALH). A helical transmembrane segment spans residues 92–110 (FLLDLSRSVGMAFLAAVAL). Residues 111 to 131 (DRYLRVVHPRLKVNLLSPQAA) lie on the Cytoplasmic side of the membrane. The chain crosses the membrane as a helical span at residues 132–152 (LGVSGLVWLLMVALTCPGLLI). The Extracellular portion of the chain corresponds to 153–180 (SEAAQNSTRCHSFYSRADGSFSIIWQEA). A helical membrane pass occupies residues 181-201 (LSCLQFVLPFGLIVFCNAGII). The Cytoplasmic segment spans residues 202–219 (RALQKRLREPEKQPKLQR). Residues 220-240 (AQALVTLVVVLFALCFLPCFL) form a helical membrane-spanning segment. Topologically, residues 241–265 (ARVLMHIFQNLGSCRALCAVAHTSD) are extracellular. A helical membrane pass occupies residues 266–284 (VTGSLTYLHSVLNPVVYCF). Topologically, residues 285-319 (SSPTFRSSYRRVFHTLRGKGQAAEPPDFNPRDSYS) are cytoplasmic.

Belongs to the G-protein coupled receptor 1 family. In terms of assembly, interacts with KRAS; in a farnesylation-dependent manner.

The protein localises to the cell membrane. Its function is as follows. High-affinity receptor for 12-(S)-hydroxy-5,8,10,14-eicosatetraenoic acid (12-S-HETE), with much lower affinities for other HETE isomers. 12-S-HETE is a eicosanoid, a 12-lipoxygenase (ALOX12) metabolite of arachidonic acid, involved in many physiologic and pathologic processes. 12-S-HETE-binding leads to activation of ERK1/2 (MAPK3/MAPK1), MEK, and NF-kappa-B pathways leading to cell growth. Plays a crucial role for proliferation, survival and macropinocytosis of KRAS-dependent cancer cells by mediating the translocation of KRAS from the endoplasmic reticulum to the plasma membrane (PM) and its association with the PM. Contributes to enhanced immune responses by inducing dendrite protrusion of small intestinal CX3CR1(+) phagocytes for the uptake of luminal antigens. Acts also as a key receptor for 12-(S)-HETE-mediated liver ischemia reperfusion injury. Proton-sensing G protein-coupled receptor. This chain is 12-(S)-hydroxy-5,8,10,14-eicosatetraenoic acid receptor (GPR31), found in Homo sapiens (Human).